A 422-amino-acid chain; its full sequence is Serine--tRNA ligase (422 aa).

An L-serine-binding site is contributed by 229–231 (TAE). Position 260–262 (260–262 (RAE)) interacts with ATP. Residue Glu283 participates in L-serine binding. 347-350 (EISS) serves as a coordination point for ATP. Ser383 contacts L-serine.

The protein belongs to the class-II aminoacyl-tRNA synthetase family. Type-1 seryl-tRNA synthetase subfamily. As to quaternary structure, homodimer. The tRNA molecule binds across the dimer.

The protein resides in the cytoplasm. It carries out the reaction tRNA(Ser) + L-serine + ATP = L-seryl-tRNA(Ser) + AMP + diphosphate + H(+). The enzyme catalyses tRNA(Sec) + L-serine + ATP = L-seryl-tRNA(Sec) + AMP + diphosphate + H(+). The protein operates within aminoacyl-tRNA biosynthesis; selenocysteinyl-tRNA(Sec) biosynthesis; L-seryl-tRNA(Sec) from L-serine and tRNA(Sec): step 1/1. Functionally, catalyzes the attachment of serine to tRNA(Ser). Is also able to aminoacylate tRNA(Sec) with serine, to form the misacylated tRNA L-seryl-tRNA(Sec), which will be further converted into selenocysteinyl-tRNA(Sec). This is Serine--tRNA ligase from Halothermothrix orenii (strain H 168 / OCM 544 / DSM 9562).